Reading from the N-terminus, the 252-residue chain is Triosephosphate isomerase (252 aa).

10–12 (NWK) provides a ligand contact to substrate. The Electrophile role is filled by His-96. Glu-168 (proton acceptor) is an active-site residue. Residues Gly-174, Ser-214, and 235-236 (GG) contribute to the substrate site.

The protein belongs to the triosephosphate isomerase family. As to quaternary structure, homodimer.

The protein resides in the cytoplasm. It carries out the reaction D-glyceraldehyde 3-phosphate = dihydroxyacetone phosphate. The protein operates within carbohydrate biosynthesis; gluconeogenesis. It participates in carbohydrate degradation; glycolysis; D-glyceraldehyde 3-phosphate from glycerone phosphate: step 1/1. In terms of biological role, involved in the gluconeogenesis. Catalyzes stereospecifically the conversion of dihydroxyacetone phosphate (DHAP) to D-glyceraldehyde-3-phosphate (G3P). The chain is Triosephosphate isomerase from Streptococcus agalactiae serotype Ia (strain ATCC 27591 / A909 / CDC SS700).